The sequence spans 166 residues: Orofacial cleft 1 candidate gene 1 protein homolog (166 aa).

The segment at 1–22 (MDKEKFQQKAVKQTKQKKSTSA) is disordered.

The sequence is that of Orofacial cleft 1 candidate gene 1 protein homolog (Ofcc1) from Mus musculus (Mouse).